We begin with the raw amino-acid sequence, 72 residues long: Crustacean hyperglycemic hormone A (72 aa).

Glutamine 1 is modified (pyrrolidone carboxylic acid). Position 3 is a D-phenylalanine; in form CHHA-II (phenylalanine 3). Cystine bridges form between cysteine 7–cysteine 43, cysteine 23–cysteine 39, and cysteine 26–cysteine 52. Valine 72 carries the post-translational modification Valine amide.

Stereoinversion of L-Phe (in CHHA-I) to D-Phe (in CHHA-II).

It localises to the secreted. Hormone found in the sinus gland of isopods and decapods which controls the blood sugar level. Has a secretagogue action over the amylase released from the midgut gland. May act as a stress hormone and may be involved in the control of molting and reproduction. This is Crustacean hyperglycemic hormone A from Cherax destructor (Common yabby crayfish).